Reading from the N-terminus, the 126-residue chain is Small ribosomal subunit protein uS8 (126 aa).

It belongs to the universal ribosomal protein uS8 family. Part of the 30S ribosomal subunit. Contacts proteins S5 and S12.

Functionally, one of the primary rRNA binding proteins, it binds directly to 16S rRNA central domain where it helps coordinate assembly of the platform of the 30S subunit. The chain is Small ribosomal subunit protein uS8 from Nitratidesulfovibrio vulgaris (strain DSM 19637 / Miyazaki F) (Desulfovibrio vulgaris).